Here is a 291-residue protein sequence, read N- to C-terminus: 33 kDa chaperonin (291 aa).

Disulfide bonds link C236–C238 and C269–C272.

The protein belongs to the HSP33 family. Under oxidizing conditions two disulfide bonds are formed involving the reactive cysteines. Under reducing conditions zinc is bound to the reactive cysteines and the protein is inactive.

It localises to the cytoplasm. Its function is as follows. Redox regulated molecular chaperone. Protects both thermally unfolding and oxidatively damaged proteins from irreversible aggregation. Plays an important role in the bacterial defense system toward oxidative stress. This is 33 kDa chaperonin from Lactobacillus johnsonii (strain CNCM I-12250 / La1 / NCC 533).